Reading from the N-terminus, the 190-residue chain is Elongation factor P-like protein (190 aa).

The protein belongs to the elongation factor P family.

The chain is Elongation factor P-like protein from Photorhabdus laumondii subsp. laumondii (strain DSM 15139 / CIP 105565 / TT01) (Photorhabdus luminescens subsp. laumondii).